Reading from the N-terminus, the 630-residue chain is Internalin B (630 aa).

The first 30 residues, 1-30 (MKEKHNPRRKYCLISGLAIIFSLWIIIGNG), serve as a signal peptide directing secretion. One can recognise an LRRNT domain in the interval 31–76 (AKVQAETITVSTPIKQIFPDDAFAETIKDNLKKKSVTDAVTQNELN). Ca(2+) contacts are provided by P49, D51, E55, and D59. LRR repeat units lie at residues 75–97 (LNSI…IQYL), 98–121 (PNVT…NLKN), 123–141 (GWLF…LKDL), 142–163 (KKLK…LVHL), 164–187 (PQLE…RLTK), 189–207 (DTLS…LAGL), and 208–231 (TKLQ…GLKN). The ig-like region stretch occupies residues 241–319 (ECLNKPINHQ…RFHGRVTQPL (79 aa)). One can recognise an LRRCT domain in the interval 241-330 (ECLNKPINHQ…EVYTVSYDVD (90 aa)). The tract at residues 320–392 (KEVYTVSYDV…TLYAVFKAET (73 aa)) is b repeat region. GW domains are found at residues 393–467 (TEKT…LDRY), 472–550 (YDKG…TFYK), and 553–630 (MEKP…RAQK). Residues 399–630 (LTRYVKYIRG…TKAANLRAQK (232 aa)) are GW repeat region, necessary and sufficient for cell surface attachment, interacts with host C1QBP and with heparin.

This sequence belongs to the internalin family. As to quaternary structure, monomer. Interacts via its LRR repeats with the extracellular portion of mammalian host MET; MET can bind HGF, its endogenous ligand, and InlB simultaneously. Probably forms a dimer upon interaction with host MET, which subsequently allows dimerization of the host MET and subsequent host signaling; dimerization probably occurs via the convex surface of InlB. Interacts with host complement component 1 Q subcomponent-binding protein (C1QBP). Interacts in vitro with human intestinal mucin-2 (MUC2) but not with mucin-1. Requires Ca(2+) as cofactor.

It localises to the secreted. The protein localises to the cell surface. Its subcellular location is the cell membrane. Functionally, mediates the entry of L.monocytogenes into normally non-phagocytic mammalian host cells. Its host receptor is hepatocyte growth factor receptor (HGF receptor, a tyrosine kinase, MET) which is tyrosine-phosphorylated in response to InlB in human, green monkey, mouse and dog cell lines. Downstream adapter proteins GAB1 and CBL are phosphorylated in response to InlB, which also causes cell colony scattering. InlB binding to mammalian cells is saturable and inhibited by EDTA; InlB-coated beads can be taken up by host cells. Complement component 1 Q subcomponent-binding protein (gC1q-R, C1QBP) might act as an InlB receptor, leading to activation of PI3-kinase in green monkey cells. Stimulation of Tyr-phosphorylation by InlB is antagonized by C1QBP, showing that potentiation of MET signaling via the GW domains is not mediated by C1QBP; the exact role of C1QBP remains to be determined. Stimulation of Tyr-phosphorylation of MET by InlB is potentiated by the InlB GW domains and glycosaminoglycans such as heparin; exogenously added InlB, or hepatocyte growth factor (HGF) will also substitute for bacterial InlB, suggesting InlB promotes bacterial invasion by mimicking the hormone HGF. May stimulate phosphatidylinositol 4,5-bisphosphate 3-kinase (PI3-kinase) in green monkey cells, has less effect in humans as PI3-kinase is constitutively and highly expressed in Caco cells. Binds heparin; C1QBP and heparin seem to bind to the GW domains. The chain is Internalin B (inlB) from Listeria monocytogenes serotype 1/2a (strain EGD / Mackaness).